The sequence spans 172 residues: Large ribosomal subunit protein bL17 (172 aa).

Residues alanine 123–lysine 172 form a disordered region. Over residues glutamate 132–alanine 143 the composition is skewed to low complexity.

The protein belongs to the bacterial ribosomal protein bL17 family. In terms of assembly, part of the 50S ribosomal subunit. Contacts protein L32.

This chain is Large ribosomal subunit protein bL17, found in Thermobifida fusca (strain YX).